Here is a 194-residue protein sequence, read N- to C-terminus: Imidazoleglycerol-phosphate dehydratase (194 aa).

It belongs to the imidazoleglycerol-phosphate dehydratase family.

Its subcellular location is the cytoplasm. The catalysed reaction is D-erythro-1-(imidazol-4-yl)glycerol 3-phosphate = 3-(imidazol-4-yl)-2-oxopropyl phosphate + H2O. The protein operates within amino-acid biosynthesis; L-histidine biosynthesis; L-histidine from 5-phospho-alpha-D-ribose 1-diphosphate: step 6/9. In Bacillus cereus (strain B4264), this protein is Imidazoleglycerol-phosphate dehydratase.